Consider the following 82-residue polypeptide: Small ribosomal subunit protein bS16 (82 aa).

The protein belongs to the bacterial ribosomal protein bS16 family.

This chain is Small ribosomal subunit protein bS16, found in Francisella tularensis subsp. tularensis (strain FSC 198).